A 113-amino-acid chain; its full sequence is MQAKAVARTVRIAPRKARLVIDLIRGKEVGEAFAILRHTPKAASPIIEKVLKSAVANAEHNYDMDVNNLVITQAYVDEGPTLKRFRPRAMGRASAINKRTSHITIVVSEKKEG.

The protein belongs to the universal ribosomal protein uL22 family. As to quaternary structure, part of the 50S ribosomal subunit.

Functionally, this protein binds specifically to 23S rRNA; its binding is stimulated by other ribosomal proteins, e.g. L4, L17, and L20. It is important during the early stages of 50S assembly. It makes multiple contacts with different domains of the 23S rRNA in the assembled 50S subunit and ribosome. In terms of biological role, the globular domain of the protein is located near the polypeptide exit tunnel on the outside of the subunit, while an extended beta-hairpin is found that lines the wall of the exit tunnel in the center of the 70S ribosome. This is Large ribosomal subunit protein uL22 from Geobacillus kaustophilus (strain HTA426).